A 199-amino-acid polypeptide reads, in one-letter code: Adenosylcobinamide-GDP ribazoletransferase (199 aa).

Helical transmembrane passes span 2 to 22 (LAGG…VFAV) and 61 to 81 (IAAV…VAAL).

Belongs to the CobS family. The cofactor is Mg(2+).

The protein resides in the cell membrane. The catalysed reaction is alpha-ribazole + adenosylcob(III)inamide-GDP = adenosylcob(III)alamin + GMP + H(+). It catalyses the reaction alpha-ribazole 5'-phosphate + adenosylcob(III)inamide-GDP = adenosylcob(III)alamin 5'-phosphate + GMP + H(+). The protein operates within cofactor biosynthesis; adenosylcobalamin biosynthesis; adenosylcobalamin from cob(II)yrinate a,c-diamide: step 7/7. Functionally, joins adenosylcobinamide-GDP and alpha-ribazole to generate adenosylcobalamin (Ado-cobalamin). Also synthesizes adenosylcobalamin 5'-phosphate from adenosylcobinamide-GDP and alpha-ribazole 5'-phosphate. The sequence is that of Adenosylcobinamide-GDP ribazoletransferase from Halobacterium salinarum (strain ATCC 700922 / JCM 11081 / NRC-1) (Halobacterium halobium).